A 235-amino-acid polypeptide reads, in one-letter code: MRPDDINPRTGLVVALVSVFLVFGFMFTVSGMKGETLGNIPLLAIGPAICLPGIAAIALARKTEGCTKWPENELLWVRKLPCFRKPKDKEVVELLRTPSDLESGKGSSDELAKKAGLRGKPPPQSQGEVSVASSINSPTPTEEGECQSLVQNGHQEETSRYLDGYCPSGSSLTYSALDVKCSARDRSECPEPEDSIFFVPQDSIIVCSYKQNSPYDRYCCYINQIQGRWDHETIV.

Transmembrane regions (helical) follow at residues 12 to 32 (LVVA…VSGM) and 40 to 60 (IPLL…IALA). Positions 99-145 (SDLESGKGSSDELAKKAGLRGKPPPQSQGEVSVASSINSPTPTEEGE) are disordered. The segment covering 125–140 (SQGEVSVASSINSPTP) has biased composition (polar residues).

It localises to the membrane. This is Transmembrane protein 215 (TMEM215) from Homo sapiens (Human).